Consider the following 758-residue polypeptide: Vitamin K-dependent gamma-carboxylase (758 aa).

Residues 1–29 (MAVHRGSARAAPASDKVQKNKPAQTSGLE) are disordered. The residue at position 2 (Ala2) is an N-acetylalanine. Topologically, residues 2 to 60 (AVHRGSARAAPASDKVQKNKPAQTSGLEQGSRMARIFGFEWADLSSWQSVVTLLNRPTD) are cytoplasmic. The helical transmembrane segment at 61–81 (PANLAVFRFLFAFLMLLDIPQ) threads the bilayer. Over 82–113 (ERGLSSLDRKYLDGLDVCRFPLLDALRPLPLD) the chain is Lumenal. A disulfide bridge connects residues Cys99 and Cys450. A helical membrane pass occupies residues 114 to 134 (WMYLVYTIMFLGALGMMLGLW). Residues 135–136 (YR) are Cytoplasmic-facing. The chain crosses the membrane as a helical span at residues 137 to 157 (LSCMLFLLPYWYVFLLDKTSW). Residues 158–292 (NNHSYLYGLL…VSYFHCMNSQ (135 aa)) are Lumenal-facing. A helical membrane pass occupies residues 293–313 (LFSIGMFPYVMLASSPLFCSA). Topologically, residues 314–361 (EWPRKLVARCPKRLQELLPAKAAPRPSASCVYKRARAKAGQKPGLRHH) are cytoplasmic. The chain crosses the membrane as a helical span at residues 362–382 (LGTVFTLLYLLEQLFLPYSHF). Residues 383 to 758 (LTQGYNNWTN…PDSEHVHSEL (376 aa)) are Lumenal-facing. Residues 727-758 (PFEPVDESSASNTDSSDPHPSEPDSEHVHSEL) are disordered. Residues 742 to 758 (SDPHPSEPDSEHVHSEL) are compositionally biased toward basic and acidic residues.

This sequence belongs to the vitamin K-dependent gamma-carboxylase family. As to quaternary structure, monomer. Interacts with CALU.

The protein resides in the endoplasmic reticulum membrane. The catalysed reaction is 4-carboxy-L-glutamyl-[protein] + 2,3-epoxyphylloquinone + H2O + H(+) = phylloquinol + L-glutamyl-[protein] + CO2 + O2. In terms of biological role, mediates the vitamin K-dependent carboxylation of glutamate residues to calcium-binding gamma-carboxyglutamate (Gla) residues with the concomitant conversion of the reduced hydroquinone form of vitamin K to vitamin K epoxide. Catalyzes gamma-carboxylation of various proteins, such as blood coagulation factors (F2, F7, F9 and F10), osteocalcin (BGLAP) or matrix Gla protein (MGP). The chain is Vitamin K-dependent gamma-carboxylase (Ggcx) from Rattus norvegicus (Rat).